Consider the following 395-residue polypeptide: Elongation factor Tu (395 aa).

One can recognise a tr-type G domain in the interval Lys-10–Glu-204. A G1 region spans residues Gly-19–Thr-26. Gly-19–Thr-26 lines the GTP pocket. Mg(2+) is bound at residue Thr-26. The G2 stretch occupies residues Gly-60 to Asn-64. Residues Asp-81–Gly-84 form a G3 region. GTP contacts are provided by residues Asp-81 to His-85 and Asn-136 to Asp-139. The interval Asn-136 to Asp-139 is G4. The G5 stretch occupies residues Ser-174–Leu-176.

Belongs to the TRAFAC class translation factor GTPase superfamily. Classic translation factor GTPase family. EF-Tu/EF-1A subfamily. Monomer.

The protein localises to the cytoplasm. It carries out the reaction GTP + H2O = GDP + phosphate + H(+). Its function is as follows. GTP hydrolase that promotes the GTP-dependent binding of aminoacyl-tRNA to the A-site of ribosomes during protein biosynthesis. This Porphyromonas gingivalis (strain ATCC 33277 / DSM 20709 / CIP 103683 / JCM 12257 / NCTC 11834 / 2561) protein is Elongation factor Tu.